The following is a 327-amino-acid chain: D-alanine--D-alanine ligase (327 aa).

Positions 113 to 312 (KRLWMTHGLA…YEDFVLQVLA (200 aa)) constitute an ATP-grasp domain. 139 to 194 (VADLGLPLIVKPAREGSSIGLTKVTAADQMRAAFDKAAALDNDVIAETFVDGAELT) provides a ligand contact to ATP. Residues D266, E279, and N281 each contribute to the Mg(2+) site.

This sequence belongs to the D-alanine--D-alanine ligase family. It depends on Mg(2+) as a cofactor. The cofactor is Mn(2+).

The protein localises to the cytoplasm. The catalysed reaction is 2 D-alanine + ATP = D-alanyl-D-alanine + ADP + phosphate + H(+). It participates in cell wall biogenesis; peptidoglycan biosynthesis. Cell wall formation. The polypeptide is D-alanine--D-alanine ligase (Cupriavidus taiwanensis (strain DSM 17343 / BCRC 17206 / CCUG 44338 / CIP 107171 / LMG 19424 / R1) (Ralstonia taiwanensis (strain LMG 19424))).